The chain runs to 166 residues: Lipoprotein signal peptidase (166 aa).

Transmembrane regions (helical) follow at residues 9–29 (AGGS…FDQL), 37–57 (VFAY…LVYN), 71–91 (WQRW…CYLL), and 100–120 (FCTA…DRLL). Catalysis depends on residues aspartate 126 and aspartate 144. The helical transmembrane segment at 136 to 156 (HWPAFNLADSAITIGAALLVF) threads the bilayer.

The protein belongs to the peptidase A8 family.

Its subcellular location is the cell inner membrane. It carries out the reaction Release of signal peptides from bacterial membrane prolipoproteins. Hydrolyzes -Xaa-Yaa-Zaa-|-(S,diacylglyceryl)Cys-, in which Xaa is hydrophobic (preferably Leu), and Yaa (Ala or Ser) and Zaa (Gly or Ala) have small, neutral side chains.. The protein operates within protein modification; lipoprotein biosynthesis (signal peptide cleavage). Its function is as follows. This protein specifically catalyzes the removal of signal peptides from prolipoproteins. The chain is Lipoprotein signal peptidase from Paraburkholderia phymatum (strain DSM 17167 / CIP 108236 / LMG 21445 / STM815) (Burkholderia phymatum).